The sequence spans 418 residues: NADH-quinone oxidoreductase subunit H (418 aa).

9 consecutive transmembrane segments (helical) span residues 15–35, 83–103, 123–143, 164–184, 197–217, 262–282, 287–307, 321–341, and 349–369; these read LVLGKALAIFVFLMLNVLVAI, FVYFAAPVISTIPAFTAFAFI, LPVAVLFILGLSAIGVYGIVL, VISYEVAMGLSFAAVFLYAGS, VWFVFLLLPSFVIYLISMVGE, LATALFFGGWHAPWPLNMWAG, WWPVLWFTAKMWTFLFIYFWL, GLGWKLLIPASLVWVLIAAVI, and YAHWTPILVISSIVFAAALVL. The disordered stretch occupies residues 394 to 418; sequence AAHRAGFHPGIPDTAAAGESAGGRE.

It belongs to the complex I subunit 1 family. As to quaternary structure, NDH-1 is composed of 14 different subunits. Subunits NuoA, H, J, K, L, M, N constitute the membrane sector of the complex.

The protein resides in the cell membrane. The catalysed reaction is a quinone + NADH + 5 H(+)(in) = a quinol + NAD(+) + 4 H(+)(out). In terms of biological role, NDH-1 shuttles electrons from NADH, via FMN and iron-sulfur (Fe-S) centers, to quinones in the respiratory chain. The immediate electron acceptor for the enzyme in this species is believed to be menaquinone. Couples the redox reaction to proton translocation (for every two electrons transferred, four hydrogen ions are translocated across the cytoplasmic membrane), and thus conserves the redox energy in a proton gradient. This subunit may bind ubiquinone. This Mycobacterium avium (strain 104) protein is NADH-quinone oxidoreductase subunit H.